A 204-amino-acid chain; its full sequence is Large ribosomal subunit protein eL15 (204 aa).

Residues 172–182 (RGLRGRGHLHN) show a composition bias toward basic residues. Positions 172–204 (RGLRGRGHLHNKAPPSRRANWKRNQTLSLPRYR) are disordered. Positions 193–204 (KRNQTLSLPRYR) are enriched in polar residues.

The protein belongs to the eukaryotic ribosomal protein eL15 family.

This is Large ribosomal subunit protein eL15 (RPL15) from Petunia hybrida (Petunia).